Here is a 392-residue protein sequence, read N- to C-terminus: MSFDAVVIGSGVIGLSIARELDNRGLKVAMVARDLAEDSLSVGFASPWAGCNWYSFAEGGTPAAEWDAITFSKLAKLAEDHPDLCEKIPFCSVWDLPKSDSESEPWFKDLVFEYKKLKSTPGQHLAGGKKFGYSFKSYVLHAPNYIRHLSSEIRARGIPIHRYRLSSIDEAYNLPGIGKVSLVVNASGLGAKSLIGVEDEKVYSGRGQTVLVRAPGFKACIMHTEGFYADLDESGREITPPPPAYIIPRPGPEGHVVLGGVYQKDNWSTLPDLKEAERILKDCYNLAPELAGPNGKSWKDIEIISHNVGLRPAREGEPRLEIEEREVGTGANGGNGYEVAPKFGCEGERRKVAVVHAYGIGSAGFQASLGMAEKASDLVEKYLSGRRTSAKL.

The FAD site is built by Ser10, Ile13, Arg33, Asp34, Ala45, Ser46, Gly50, and Asn52. Anthranilate is bound by residues Phe56, Tyr245, Tyr262, and Arg311. Tyr245, Tyr262, and Arg311 together coordinate (R)-lactate. Residues Arg311, Gly361, Ser362, Gly364, and Gln366 each contribute to the FAD site. Ser362 lines the anthranilate pocket. (R)-lactate is bound at residue Ser362. The Microbody targeting signal signature appears at 390 to 392; the sequence is AKL.

This sequence belongs to the DAMOX/DASOX family. Requires FAD as cofactor.

Its subcellular location is the peroxisome matrix. The enzyme catalyses a D-alpha-amino acid + O2 + H2O = a 2-oxocarboxylate + H2O2 + NH4(+). The catalysed reaction is D-methionine + O2 + H2O = 4-methylsulfanyl-2-oxobutanoate + H2O2 + NH4(+). It catalyses the reaction D-serine + O2 + H2O = 3-hydroxypyruvate + H2O2 + NH4(+). It carries out the reaction D-histidine + O2 + H2O = 3-(imidazol-5-yl)pyruvate + H2O2 + NH4(+). The enzyme catalyses D-proline + O2 = 1-pyrroline-2-carboxylate + H2O2. The catalysed reaction is D-alanine + O2 + H2O = pyruvate + H2O2 + NH4(+). It catalyses the reaction D-leucine + O2 + H2O = 4-methyl-2-oxopentanoate + H2O2 + NH4(+). It carries out the reaction D-valine + O2 + H2O = 3-methyl-2-oxobutanoate + H2O2 + NH4(+). Catalyzes the oxidative deamination of D-amino acids with broad substrate specificity. Enables the organism to utilize D-amino acids as a source of nutrients. Enables the organism to utilize D-alanine, D-cysteine, D-histidine, D-leucine, D-methionine, D-phenylalanine, D-proline, D-serine, D-threonine, D-aspartate and D-valine as a nitrogen source and may also contribute to utlization of D-tryptophan, D-tyrosine and D-asparagine as a nitrogen source. Protects the organism from the toxicity of D-amino acids, including from D-alanine. May play a role in its interaction with the host. In Cryptococcus deuterogattii (strain R265) (Cryptococcus gattii VGII (strain R265)), this protein is D-amino-acid oxidase 2.